Here is a 308-residue protein sequence, read N- to C-terminus: MGERQAVKVAILGTGNIGTDLMYKLLRNPGHMELAMFAGIDPQSEGIARAKKLGIPTSYEGIKAVLDDPEIRIVFDATSAKAHVRHAKMLREAGKIAIDLTPAARGPYVVPPVNLGAHLDKDNVNLITCGGQATIPLVFAVSRVVPVRYAEIVSTVASKSAGPGTRQNIDEFTFTTAHGLEAIGGAEQGKAIIILNPAEPPIIMRNTVYVIPANEEFDQAAIVASVDQMVAEVQQYVPGYRLKDAPVFDRRRTPWGERTIIAMLLEVEGAGDFLPPYSGNLDIMTAAAWRVGELFAQHLLGIRQEVAA.

Position 14–17 (14–17 (TGNI)) interacts with NAD(+). The active-site Acyl-thioester intermediate is cysteine 129. NAD(+) contacts are provided by residues 160 to 168 (SAGPGTRQN) and asparagine 280.

Belongs to the acetaldehyde dehydrogenase family.

It carries out the reaction acetaldehyde + NAD(+) + CoA = acetyl-CoA + NADH + H(+). This Thermomicrobium roseum (strain ATCC 27502 / DSM 5159 / P-2) protein is Acetaldehyde dehydrogenase.